We begin with the raw amino-acid sequence, 852 residues long: RNA-binding protein 10 (852 aa).

2 stretches are compositionally biased toward basic and acidic residues: residues M1–G14 and R21–P45. The interval M1–Q78 is disordered. In terms of domain architecture, RRM 1 spans R37 to P132. Residue S61 is modified to Phosphoserine. The RanBP2-type zinc finger occupies K135 to E165. The 85-residue stretch at D223–G307 folds into the RRM 2 domain. K306 bears the N6-acetyllysine mark. 6 disordered regions span residues G343–E365, K386–T410, A426–S446, S459–P489, E542–K568, and D634–L675. The span at Y430–S446 shows a compositional bias: polar residues. Positions S463–S484 are enriched in low complexity. Over residues A545 to K561 the composition is skewed to basic and acidic residues. A phosphoserine mark is found at S640, S645, S655, S658, and S660. The segment covering E665–L675 has biased composition (basic and acidic residues). The C2H2-type; atypical zinc finger occupies L681–H706. S703, S719, and S767 each carry phosphoserine. The disordered stretch occupies residues A740 to I783. The G-patch domain maps to S780–S826. R824 carries the post-translational modification Omega-N-methylarginine.

As to quaternary structure, associates with the spliceosome. Component of a large chromatin remodeling complex, at least composed of MYSM1, PCAF, RBM10 and KIF11/TRIP5.

Its subcellular location is the nucleus. In terms of biological role, binds to ssRNA containing the consensus sequence 5'-AGGUAA-3'. May be involved in post-transcriptional processing, most probably in mRNA splicing. Binds to RNA homopolymers, with a preference for poly(G) and poly(U) and little for poly(A). May bind to specific miRNA hairpins. This Rattus norvegicus (Rat) protein is RNA-binding protein 10.